Consider the following 670-residue polypeptide: MESLQDKITHLRTLLRHYEYQYHVLDAPAVPDAEYDRLMGELRELEAAHPELLTTDSPTQRVGAAPLSAFEQVRHEVPMLSLDNAFDEESYRAFNKRVQDRLKSSDDLTFCCELKLDGLAVSLLYEQGELVRAATRGDGTTGENITANVRTIRAIPLRLSGDNIPERLEVRGEVFMPLAGFEKMNEQARRGGQKIFANPRNAAAGSLRQLDPRITAKRPLTFFCYGLGLLEGGEMPRSHMARLQQFKAWGLPVSDRVRLCHSPSDVLDFYHQVEADRPALGFDIDGVVIKVDSLEQQEQLGFVARAPRWAVAFKFPAQEQITTVRDVEFQVGRTGAITPVARLEPVLVAGVMVSNATLHNADEIERLGLRIGDRVVIRRAGDVIPQVMSVVESAEGARDVIFPTHCPVCGSDVERVEGEVVARCTGGLICGAQRKGALKHFVSRRALDIDGMGEKIIDQLVDKEYVKNPAELFELTAGKLTGLDRMGPKSAQNVVDALAKAKQTTFARFLYALGISEVGEATAANLAAHFGTLEALMAADIDTLITVPDVGKVVASHVRNFLDEESNREIIRLLVEKAGVNWPDVVVVKAEEIDSPFAGKTVVLTGSLSILSRDDAKERLQALGAKVSGSVSKKTDLVIAGEAAGSKLAKAQELGIDVIDEQEMMRLLGE.

NAD(+) contacts are provided by residues 32–36 (DAEYD), 81–82 (SL), and Glu-113. The active-site N6-AMP-lysine intermediate is Lys-115. NAD(+) is bound by residues Arg-136, Glu-173, Lys-290, and Lys-314. Zn(2+)-binding residues include Cys-406, Cys-409, Cys-424, and Cys-430. One can recognise a BRCT domain in the interval 592 to 670 (EIDSPFAGKT…EQEMMRLLGE (79 aa)).

Belongs to the NAD-dependent DNA ligase family. LigA subfamily. Mg(2+) serves as cofactor. Mn(2+) is required as a cofactor.

It carries out the reaction NAD(+) + (deoxyribonucleotide)n-3'-hydroxyl + 5'-phospho-(deoxyribonucleotide)m = (deoxyribonucleotide)n+m + AMP + beta-nicotinamide D-nucleotide.. In terms of biological role, DNA ligase that catalyzes the formation of phosphodiester linkages between 5'-phosphoryl and 3'-hydroxyl groups in double-stranded DNA using NAD as a coenzyme and as the energy source for the reaction. It is essential for DNA replication and repair of damaged DNA. The polypeptide is DNA ligase (Erwinia tasmaniensis (strain DSM 17950 / CFBP 7177 / CIP 109463 / NCPPB 4357 / Et1/99)).